Reading from the N-terminus, the 574-residue chain is Dihydroxy-acid dehydratase 2 (574 aa).

The disordered stretch occupies residues 1-20; sequence MNAKTNIKQRLPSRHVTEGP. C56 is a [2Fe-2S] cluster binding site. D88 serves as a coordination point for Mg(2+). C129 lines the [2Fe-2S] cluster pocket. Positions 130 and 131 each coordinate Mg(2+). The residue at position 131 (K131) is an N6-carboxylysine. Position 201 (C201) interacts with [2Fe-2S] cluster. Position 451 (E451) interacts with Mg(2+). S477 (proton acceptor) is an active-site residue.

Belongs to the IlvD/Edd family. Homodimer. Requires [2Fe-2S] cluster as cofactor. The cofactor is Mg(2+).

The catalysed reaction is (2R)-2,3-dihydroxy-3-methylbutanoate = 3-methyl-2-oxobutanoate + H2O. It catalyses the reaction (2R,3R)-2,3-dihydroxy-3-methylpentanoate = (S)-3-methyl-2-oxopentanoate + H2O. It functions in the pathway amino-acid biosynthesis; L-isoleucine biosynthesis; L-isoleucine from 2-oxobutanoate: step 3/4. The protein operates within amino-acid biosynthesis; L-valine biosynthesis; L-valine from pyruvate: step 3/4. In terms of biological role, functions in the biosynthesis of branched-chain amino acids. Catalyzes the dehydration of (2R,3R)-2,3-dihydroxy-3-methylpentanoate (2,3-dihydroxy-3-methylvalerate) into 2-oxo-3-methylpentanoate (2-oxo-3-methylvalerate) and of (2R)-2,3-dihydroxy-3-methylbutanoate (2,3-dihydroxyisovalerate) into 2-oxo-3-methylbutanoate (2-oxoisovalerate), the penultimate precursor to L-isoleucine and L-valine, respectively. This chain is Dihydroxy-acid dehydratase 2, found in Bradyrhizobium diazoefficiens (strain JCM 10833 / BCRC 13528 / IAM 13628 / NBRC 14792 / USDA 110).